A 753-amino-acid chain; its full sequence is 5-methyltetrahydropteroyltriglutamate--homocysteine methyltransferase (753 aa).

5-methyltetrahydropteroyltri-L-glutamate-binding positions include 17–20 and lysine 117; that span reads RELK. L-homocysteine contacts are provided by residues 431–433 and glutamate 484; that span reads IGS. L-methionine contacts are provided by residues 431 to 433 and glutamate 484; that span reads IGS. 5-methyltetrahydropteroyltri-L-glutamate contacts are provided by residues 515–516 and tryptophan 561; that span reads RC. An L-homocysteine-binding site is contributed by aspartate 599. Residue aspartate 599 coordinates L-methionine. Glutamate 605 is a binding site for 5-methyltetrahydropteroyltri-L-glutamate. Zn(2+) is bound by residues histidine 641, cysteine 643, and glutamate 665. The active-site Proton donor is the histidine 694. Cysteine 726 lines the Zn(2+) pocket.

This sequence belongs to the vitamin-B12 independent methionine synthase family. Requires Zn(2+) as cofactor.

It carries out the reaction 5-methyltetrahydropteroyltri-L-glutamate + L-homocysteine = tetrahydropteroyltri-L-glutamate + L-methionine. It participates in amino-acid biosynthesis; L-methionine biosynthesis via de novo pathway; L-methionine from L-homocysteine (MetE route): step 1/1. Functionally, catalyzes the transfer of a methyl group from 5-methyltetrahydrofolate to homocysteine resulting in methionine formation. This is 5-methyltetrahydropteroyltriglutamate--homocysteine methyltransferase from Shigella sonnei (strain Ss046).